Reading from the N-terminus, the 126-residue chain is Large ribosomal subunit protein bL12 (126 aa).

Belongs to the bacterial ribosomal protein bL12 family. In terms of assembly, homodimer. Part of the ribosomal stalk of the 50S ribosomal subunit. Forms a multimeric L10(L12)X complex, where L10 forms an elongated spine to which 2 to 4 L12 dimers bind in a sequential fashion. Binds GTP-bound translation factors.

Functionally, forms part of the ribosomal stalk which helps the ribosome interact with GTP-bound translation factors. Is thus essential for accurate translation. The chain is Large ribosomal subunit protein bL12 from Caulobacter sp. (strain K31).